Consider the following 313-residue polypeptide: Porphobilinogen deaminase (313 aa).

Cys-242 carries the post-translational modification S-(dipyrrolylmethanemethyl)cysteine.

This sequence belongs to the HMBS family. As to quaternary structure, monomer. Requires dipyrromethane as cofactor.

It carries out the reaction 4 porphobilinogen + H2O = hydroxymethylbilane + 4 NH4(+). It functions in the pathway porphyrin-containing compound metabolism; protoporphyrin-IX biosynthesis; coproporphyrinogen-III from 5-aminolevulinate: step 2/4. In terms of biological role, tetrapolymerization of the monopyrrole PBG into the hydroxymethylbilane pre-uroporphyrinogen in several discrete steps. This Escherichia coli O7:K1 (strain IAI39 / ExPEC) protein is Porphobilinogen deaminase.